We begin with the raw amino-acid sequence, 738 residues long: Polyphosphate kinase (738 aa).

The segment at 1 to 48 (MIGNDRWVTEIETGPVTEARPDTNAREPGDRTPAAPPAATPAATTDQL) is disordered. Positions 19–30 (ARPDTNAREPGD) are enriched in basic and acidic residues. Asn-91 lines the ATP pocket. Arg-427 and Arg-457 together coordinate Mg(2+). The active-site Phosphohistidine intermediate is the His-487. Residues Tyr-520, Arg-620, and His-648 each contribute to the ATP site.

Belongs to the polyphosphate kinase 1 (PPK1) family. The cofactor is Mg(2+). In terms of processing, an intermediate of this reaction is the autophosphorylated ppk in which a phosphate is covalently linked to a histidine residue through a N-P bond.

It carries out the reaction [phosphate](n) + ATP = [phosphate](n+1) + ADP. Catalyzes the reversible transfer of the terminal phosphate of ATP to form a long-chain polyphosphate (polyP). This Mycobacterium marinum (strain ATCC BAA-535 / M) protein is Polyphosphate kinase.